Here is a 153-residue protein sequence, read N- to C-terminus: Myoglobin (153 aa).

The Globin domain maps to 1–147 (MATACVKSLE…FSDECLDHLK (147 aa)). A heme b-binding site is contributed by His94.

It belongs to the globin family. Homodimer; disulfide-linked. Post-translationally, the N-terminus is blocked. In terms of tissue distribution, body wall globin is localized in cellular compartments belonging to the hypodermis, the dorsal, ventral and lateral cords, the nerve ring, and body wall muscle.

The protein localises to the cytoplasm. High oxygen affinity. Probably supplies oxygen needed for muscle activity. The chain is Myoglobin from Ascaris suum (Pig roundworm).